Here is a 421-residue protein sequence, read N- to C-terminus: Lipid II:glycine glycyltransferase (421 aa).

The protein belongs to the FemABX family. Monomer.

It localises to the cytoplasm. It carries out the reaction beta-D-GlcNAc-(1-&gt;4)-Mur2Ac(oyl-L-Ala-D-isoglutaminyl-L-Lys-D-Ala-D-Ala)-di-trans,octa-cis-undecaprenyl diphosphate + glycyl-tRNA(Gly) = beta-D-GlcNAc-(1-&gt;4)-Mur2Ac(oyl-L-Ala-D-isoglutaminyl-L-Lys-(N(6)-Gly)-D-Ala-D-Ala)-di-trans,octa-cis-undecaprenyl diphosphate + tRNA(Gly) + H(+). Catalyzes the incorporation of the first glycine of the pentaglycine interpeptide bridge, which is characteristic of the S.aureus peptidoglycan. This glycine is added to the epsilon-amino group of the L-lysine of the membrane-bound lipid II intermediate (GlcNAc-(beta-1,4)-N-acetylmuramic acid(-L-Ala-D-iGln-L-Lys-D-Ala-D-Ala)-pyrophosphoryl-undecaprenol), using glycyl-tRNA(Gly) as donor, in a ribosome-independent mechanism. This is Lipid II:glycine glycyltransferase (femX) from Staphylococcus aureus (strain MSSA476).